Consider the following 445-residue polypeptide: Putative aldehyde dehydrogenase AldX (445 aa).

Residues E214 and C248 contribute to the active site.

Belongs to the aldehyde dehydrogenase family.

The catalysed reaction is an aldehyde + NAD(+) + H2O = a carboxylate + NADH + 2 H(+). This is Putative aldehyde dehydrogenase AldX (aldX) from Bacillus subtilis (strain 168).